A 678-amino-acid chain; its full sequence is Translation factor GUF1 homolog, chloroplastic (678 aa).

The N-terminal 43 residues, Met-1 to Tyr-43, are a transit peptide targeting the chloroplast. The 182-residue stretch at Lys-81–Arg-262 folds into the tr-type G domain. Residues Ala-90–Ser-97, Asp-155–His-159, and Asn-209–Asp-212 each bind GTP.

Belongs to the TRAFAC class translation factor GTPase superfamily. Classic translation factor GTPase family. LepA subfamily.

It is found in the plastid. The protein resides in the chloroplast. The catalysed reaction is GTP + H2O = GDP + phosphate + H(+). Functionally, promotes chloroplast protein synthesis. May act as a fidelity factor of the translation reaction, by catalyzing a one-codon backward translocation of tRNAs on improperly translocated ribosomes. The protein is Translation factor GUF1 homolog, chloroplastic of Populus trichocarpa (Western balsam poplar).